Here is a 174-residue protein sequence, read N- to C-terminus: NADH-quinone oxidoreductase subunit B (174 aa).

[4Fe-4S] cluster-binding residues include Cys-53, Cys-54, Cys-118, and Cys-148.

It belongs to the complex I 20 kDa subunit family. NDH-1 is composed of 14 different subunits. Subunits NuoB, C, D, E, F, and G constitute the peripheral sector of the complex. The cofactor is [4Fe-4S] cluster.

Its subcellular location is the cell inner membrane. The enzyme catalyses a quinone + NADH + 5 H(+)(in) = a quinol + NAD(+) + 4 H(+)(out). Its function is as follows. NDH-1 shuttles electrons from NADH, via FMN and iron-sulfur (Fe-S) centers, to quinones in the respiratory chain. Couples the redox reaction to proton translocation (for every two electrons transferred, four hydrogen ions are translocated across the cytoplasmic membrane), and thus conserves the redox energy in a proton gradient. This chain is NADH-quinone oxidoreductase subunit B, found in Ruegeria sp. (strain TM1040) (Silicibacter sp.).